The primary structure comprises 131 residues: Small ribosomal subunit protein uS8 (131 aa).

Belongs to the universal ribosomal protein uS8 family. As to quaternary structure, part of the 30S ribosomal subunit. Contacts proteins S5 and S12.

In terms of biological role, one of the primary rRNA binding proteins, it binds directly to 16S rRNA central domain where it helps coordinate assembly of the platform of the 30S subunit. The chain is Small ribosomal subunit protein uS8 from Chlorobium luteolum (strain DSM 273 / BCRC 81028 / 2530) (Pelodictyon luteolum).